The chain runs to 216 residues: Endoplasmic reticulum vesicle protein 25 (216 aa).

The N-terminal stretch at 1-25 is a signal peptide; the sequence is MGSSRLAMRSALGLFFLLFVQISLA. The Lumenal segment spans residues 26-185; that stretch reads LKFDIAAGKG…TNESTNERVK (160 aa). The region spanning 36 to 126 is the GOLD domain; it reads ERCIRNFVLK…HRSIELDVDI (91 aa). Residues 186 to 206 traverse the membrane as a helical segment; the sequence is WFAFGTMGMLVGLGVWQVIYL. The Cytoplasmic portion of the chain corresponds to 207–216; the sequence is RAYFRSKHLI.

The protein belongs to the EMP24/GP25L family.

The protein localises to the endoplasmic reticulum membrane. Its subcellular location is the golgi apparatus membrane. In terms of biological role, constituent of COPII-coated endoplasmic reticulum-derived transport vesicles. Required for efficient transport of a subset of secretory proteins to the Golgi. Facilitates retrograde transport from the Golgi to the endoplasmic reticulum. This chain is Endoplasmic reticulum vesicle protein 25 (erv25), found in Emericella nidulans (strain FGSC A4 / ATCC 38163 / CBS 112.46 / NRRL 194 / M139) (Aspergillus nidulans).